The following is a 709-amino-acid chain: Twinkle homolog protein, chloroplastic/mitochondrial (709 aa).

The N-terminal 16 residues, 1–16, are a transit peptide targeting the chloroplast and mitochondrion; it reads MRFLLRLPQIHFRKLS. Residues 280–385 enclose the Toprim domain; the sequence is SEVIIVEGEI…KKSEDEHFKD (106 aa). Positions 286, 348, and 350 each coordinate Mg(2+). The region spanning 430-698 is the SF4 helicase domain; it reads THGHEYGVST…GSYSDSPVTP (269 aa). ATP is bound at residue 460–467; it reads GIPNSGKS.

The cofactor is Mg(2+). As to expression, expressed in young leaves and shoot apex tissues. Detected in developing tissues such as cotyledons, sepals, pistils and inflorescences. Nearly undetectable in mature leaves.

Its subcellular location is the plastid. The protein localises to the chloroplast. The protein resides in the mitochondrion. The catalysed reaction is ATP + H2O = ADP + phosphate + H(+). Has both DNA primase and DNA helicase activities and may be involved in organelle DNA replication. Capable of producing RNA primers of 9 to 18 bases from a single-stranded DNA template. This Arabidopsis thaliana (Mouse-ear cress) protein is Twinkle homolog protein, chloroplastic/mitochondrial.